Reading from the N-terminus, the 397-residue chain is Lymphoid enhancer-binding factor 1 (397 aa).

The segment at 1-60 (MPQLSGGGGGGDPELCATDEMIPFKDEGDPQKEKIFAEISHPEEEGDLADIKSSLVNESE) is CTNNB1-binding. Residue Lys-25 forms a Glycyl lysine isopeptide (Lys-Gly) (interchain with G-Cter in SUMO) linkage. The interval 38–102 (EISHPEEEGD…KHPDGGLYNK (65 aa)) is disordered. The span at 80–96 (PYHDKAREHPDDGKHPD) shows a compositional bias: basic and acidic residues. Ser-130 carries the phosphoserine modification. Thr-153 carries the phosphothreonine; by NLK modification. Phosphoserine; by NLK is present on Ser-164. Disordered regions lie at residues 164–190 (SPGS…PAPE) and 266–296 (VKQE…KRPH). Residue Lys-267 forms a Glycyl lysine isopeptide (Lys-Gly) (interchain with G-Cter in SUMO) linkage. The span at 267–294 (KQEHPHTDSDLMHVKPEHEQRKEQEPKR) shows a compositional bias: basic and acidic residues. Residues 297 to 365 (IKKPLNAFML…LHMQLYPGWS (69 aa)) constitute a DNA-binding region (HMG box). The interval 367–397 (RDNYGKKKKRKREKLQESTSGTGPRMTAAYI) is disordered.

Belongs to the TCF/LEF family. In terms of assembly, binds the armadillo repeat of CTNNB1 and forms a stable complex. Interacts with TLE1, PIASG, ALYREF/THOC4, EP300, MDFI and MDFIC. Interacts with DAZAP2. Phosphorylated at Thr-153 and/or Ser-164 by NLK. Phosphorylation by NLK at these sites represses LEF1-mediated transcriptional activation of target genes of the canonical Wnt signaling pathway.

It is found in the nucleus. Its function is as follows. Transcription factor that binds DNA in a sequence-specific manner. Participates in the Wnt signaling pathway. Activates transcription of target genes in the presence of CTNNB1 and EP300. PIASG antagonizes both Wnt-dependent and Wnt-independent activation by LEF1. TLE1, TLE2, TLE3 and TLE4 repress transactivation mediated by LEF1 and CTNNB1. Regulates T-cell receptor alpha enhancer function. Required for IL17A expressing gamma-delta T-cell maturation and development, via binding to regulator loci of BLK to modulate expression. Acts as a positive regulator of odontoblast differentiation during mesenchymal tooth germ formation, expression is repressed during the bell stage by MSX1-mediated inhibition of CTNNB1 signaling. May play a role in hair cell differentiation and follicle morphogenesis. The chain is Lymphoid enhancer-binding factor 1 from Rattus norvegicus (Rat).